Here is a 207-residue protein sequence, read N- to C-terminus: Probable GTP-binding protein EngB (207 aa).

The 181-residue stretch at 23–203 (GAPEVCFVGR…GAHIENWISP (181 aa)) folds into the EngB-type G domain. GTP-binding positions include 31-38 (GRSNAGKS), 58-62 (GRTRL), 83-86 (DLPG), 150-153 (TKAD), and 182-184 (FSS). Residues Ser38 and Thr60 each coordinate Mg(2+).

This sequence belongs to the TRAFAC class TrmE-Era-EngA-EngB-Septin-like GTPase superfamily. EngB GTPase family. Mg(2+) serves as cofactor.

Necessary for normal cell division and for the maintenance of normal septation. This Bordetella bronchiseptica (strain ATCC BAA-588 / NCTC 13252 / RB50) (Alcaligenes bronchisepticus) protein is Probable GTP-binding protein EngB.